We begin with the raw amino-acid sequence, 638 residues long: Ubiquilin-2 (638 aa).

A compositionally biased stretch (low complexity) spans 1 to 26 (MAENGESSGPPRPSRGPAAAPGAASP). Disordered regions lie at residues 1 to 31 (MAEN…AEPK) and 107 to 158 (RPQG…SSFG). An N-acetylalanine modification is found at Ala2. Ser25 bears the Phosphoserine mark. Positions 33–107 (IKVTVKTPKE…VHLVIKSQNR (75 aa)) constitute a Ubiquitin-like domain. Low complexity predominate over residues 112 to 158 (ATTQPSTTAGTSTTTTTTTTAAAPAATTSSAPRSSSTPTTTNSSSFG). STI1 domains lie at 189-217 (SPEM…QLIM) and 219-258 (NPQM…MQEM). The segment at 298–364 (FGGNPFATVG…SGSSSSSTTA (67 aa)) is disordered. Low complexity predominate over residues 305-316 (TVGSSSTSGEGT). Pro residues predominate over residues 327–336 (LPNPWAPPPT). Residues 337–364 (TQTAATTTTTTTTSSGSGSGSSSSSTTA) are compositionally biased toward low complexity. 2 consecutive STI1 domains span residues 393 to 440 (NPQL…QEQM) and 444 to 476 (LPNF…QQGL). Tandem repeats lie at residues 505-507 (PVG), 508-510 (PVT), 511-513 (PIG), 514-516 (PIG), 517-519 (PIV), 520-522 (PFT), 523-525 (PIG), 526-528 (PIG), 529-531 (PIG), 532-533 (PT), and 535-537 (PAS). An 11 X 3 AA tandem repeats P-X-X region spans residues 505–537 (PVGPVTPIGPIGPIVPFTPIGPIGPIGPTGPAS). Residues 528 to 570 (GPIGPTGPASSPGSTGTGIPPATTVSSSAPTETISPTSESGPN) form a disordered region. Positions 533–551 (TGPASSPGSTGTGIPPATT) are enriched in low complexity. A compositionally biased stretch (polar residues) spans 552 to 570 (VSSSAPTETISPTSESGPN). The UBA domain occupies 589-635 (PPNPEVRFQQQLEQLNAMGFLNREANLQALIATGGDINAAIERLLGS).

Homodimer. Forms heterodimer with UBQLN1. Binds UBE3A and BTRC. Interacts with the 19S proteasome subunit. Interacts with C9orf72. Binds CD47. Interacts with HNRNPA1 and HNRNPU. Found in a complex with UBQLN1 and MAP1LC3A/B/C. Interacts with EPS15, EPN1 and EPN2. Interacts with HERPUD1. Interacts with RAD23A. Interacts with TARDBP. Interacts (via C-terminus) with FAF2 (via N-terminus). Interacts with UBQLN4. Post-translationally, degraded during macroautophagy. In terms of tissue distribution, highly expressed in smooth muscle. Expression in other tissues is very low.

It is found in the cytoplasm. It localises to the nucleus. Its subcellular location is the membrane. The protein localises to the cytoplasmic vesicle. The protein resides in the autophagosome. Its function is as follows. Plays an important role in the regulation of different protein degradation mechanisms and pathways including ubiquitin-proteasome system (UPS), autophagy and the endoplasmic reticulum-associated protein degradation (ERAD) pathway. Mediates the proteasomal targeting of misfolded or accumulated proteins for degradation by binding (via UBA domain) to their polyubiquitin chains and by interacting (via ubiquitin-like domain) with the subunits of the proteasome. Plays a role in the ERAD pathway via its interaction with ER-localized proteins FAF2/UBXD8 and HERPUD1 and may form a link between the polyubiquitinated ERAD substrates and the proteasome. Involved in the regulation of macroautophagy and autophagosome formation; required for maturation of autophagy-related protein LC3 from the cytosolic form LC3-I to the membrane-bound form LC3-II and may assist in the maturation of autophagosomes to autolysosomes by mediating autophagosome-lysosome fusion. Negatively regulates the endocytosis of GPCR receptors: AVPR2 and ADRB2, by specifically reducing the rate at which receptor-arrestin complexes concentrate in clathrin-coated pits (CCPs). Links CD47 to vimentin-containing intermediate filaments of the cytoskeleton. The protein is Ubiquilin-2 (Ubqln2) of Mus musculus (Mouse).